Reading from the N-terminus, the 409-residue chain is Arginine biosynthesis bifunctional protein ArgJ (409 aa).

Substrate is bound by residues Thr-156, Lys-182, Thr-193, Glu-280, Asn-404, and Ser-409. Thr-193 functions as the Nucleophile in the catalytic mechanism.

It belongs to the ArgJ family. In terms of assembly, heterotetramer of two alpha and two beta chains.

Its subcellular location is the cytoplasm. It carries out the reaction N(2)-acetyl-L-ornithine + L-glutamate = N-acetyl-L-glutamate + L-ornithine. The catalysed reaction is L-glutamate + acetyl-CoA = N-acetyl-L-glutamate + CoA + H(+). It participates in amino-acid biosynthesis; L-arginine biosynthesis; L-ornithine and N-acetyl-L-glutamate from L-glutamate and N(2)-acetyl-L-ornithine (cyclic): step 1/1. The protein operates within amino-acid biosynthesis; L-arginine biosynthesis; N(2)-acetyl-L-ornithine from L-glutamate: step 1/4. In terms of biological role, catalyzes two activities which are involved in the cyclic version of arginine biosynthesis: the synthesis of N-acetylglutamate from glutamate and acetyl-CoA as the acetyl donor, and of ornithine by transacetylation between N(2)-acetylornithine and glutamate. The sequence is that of Arginine biosynthesis bifunctional protein ArgJ from Nitrosomonas europaea (strain ATCC 19718 / CIP 103999 / KCTC 2705 / NBRC 14298).